A 317-amino-acid polypeptide reads, in one-letter code: Putative ribosomal protein uL10-like (317 aa).

Tyrosine 24 carries the post-translational modification Phosphotyrosine. Phosphothreonine is present on threonine 59. The segment at 292-317 (AAAPAKVEAKEESEESDEDMGFGLFD) is disordered. Lysine 297 is covalently cross-linked (Glycyl lysine isopeptide (Lys-Gly) (interchain with G-Cter in SUMO1); alternate). Lysine 297 participates in a covalent cross-link: Glycyl lysine isopeptide (Lys-Gly) (interchain with G-Cter in SUMO2); alternate. Positions 302–311 (EESEESDEDM) are enriched in acidic residues. Phosphoserine is present on residues serine 304 and serine 307.

The protein belongs to the universal ribosomal protein uL10 family. P0 forms a pentameric complex by interaction with dimers of P1 and P2.

In terms of biological role, ribosomal protein P0 is the functional equivalent of E.coli protein L10. This Homo sapiens (Human) protein is Putative ribosomal protein uL10-like (RPLP0P6).